We begin with the raw amino-acid sequence, 536 residues long: Ecdysone receptor (536 aa).

The segment at 1–114 (MKTENLIVTT…GPVPRQQEEL (114 aa)) is modulating. Positions 77-107 (SPNSKLDDGNMSVHMGDGLDGKKSSSKKGPV) are disordered. 2 NR C4-type zinc fingers span residues 115–135 (CLVCGDRASGYHYNALTCEGC) and 151–175 (CKFGHECEMDMYMRRKCQECRLKKC). The segment at residues 115-187 (CLVCGDRASG…VGMRPECVVP (73 aa)) is a DNA-binding region (nuclear receptor). Positions 278-514 (NQVAVIYKLI…FLEEVWDVGD (237 aa)) constitute an NR LBD domain.

The protein belongs to the nuclear hormone receptor family. NR1 subfamily.

It localises to the nucleus. Functionally, receptor for ecdysone. Binds to ecdysone response elements (ECRES). This is Ecdysone receptor (EcR) from Chironomus tentans (Midge).